A 150-amino-acid polypeptide reads, in one-letter code: Putative biopolymer transport protein ExbB-like 2 (150 aa).

3 helical membrane-spanning segments follow: residues 5-25 (VDYGIIGFLIFLSVIVIAIAI), 63-83 (APYIGLLGTVMGIMLTFMDLG), and 97-117 (LALALKATGMGLLVAIPAIVI).

This sequence belongs to the ExbB/TolQ family.

The protein localises to the cell inner membrane. The protein is Putative biopolymer transport protein ExbB-like 2 of Helicobacter pylori (strain ATCC 700392 / 26695) (Campylobacter pylori).